Reading from the N-terminus, the 135-residue chain is Small ribosomal subunit protein uS8 (135 aa).

This sequence belongs to the universal ribosomal protein uS8 family. In terms of assembly, part of the 30S ribosomal subunit. Contacts proteins S5 and S12.

In terms of biological role, one of the primary rRNA binding proteins, it binds directly to 16S rRNA central domain where it helps coordinate assembly of the platform of the 30S subunit. This is Small ribosomal subunit protein uS8 from Corynebacterium urealyticum (strain ATCC 43042 / DSM 7109).